The primary structure comprises 239 residues: Lytic polysaccharide monooxygenase-like protein X325 (239 aa).

An N-terminal signal peptide occupies residues 1-24; that stretch reads MVLPSSVSQWAALIALLCAGLANA. Histidine 25 is a binding site for Cu(2+). N-linked (GlcNAc...) asparagine glycosylation is found at asparagine 41, asparagine 56, asparagine 79, asparagine 117, asparagine 150, and asparagine 197. Intrachain disulfides connect cysteine 71-cysteine 176 and cysteine 141-cysteine 195. Serine 214 carries GPI-anchor amidated serine lipidation. Residues 215–239 constitute a propeptide, removed in mature form; sequence AAAPKSSLMSVLPVYMVALLSWAMM.

The protein belongs to the X325 family. Cu(2+) is required as a cofactor.

It localises to the cell membrane. Lytic polysaccharide monooxygenase-like protein that has diverged to biological functions other than polysaccharide degradation since it does not perform oxidative cleavage of polysaccharides. Acts as a cell surface-bound protein that functions in the copper-accumulation pathway. May also act as the major cell wall sensor that regulates MAP kinase-dependent hyphal anastomosis, the fusion of hyphal cells. The polypeptide is Lytic polysaccharide monooxygenase-like protein X325 (Aspergillus fumigatus (strain ATCC MYA-4609 / CBS 101355 / FGSC A1100 / Af293) (Neosartorya fumigata)).